The chain runs to 229 residues: Demethylmenaquinone methyltransferase (229 aa).

Residues Thr-57, Asp-77, and 101 to 102 (DV) each bind S-adenosyl-L-methionine.

The protein belongs to the class I-like SAM-binding methyltransferase superfamily. MenG/UbiE family.

The catalysed reaction is a 2-demethylmenaquinol + S-adenosyl-L-methionine = a menaquinol + S-adenosyl-L-homocysteine + H(+). The protein operates within quinol/quinone metabolism; menaquinone biosynthesis; menaquinol from 1,4-dihydroxy-2-naphthoate: step 2/2. Functionally, methyltransferase required for the conversion of demethylmenaquinol (DMKH2) to menaquinol (MKH2). In Chlamydia trachomatis serovar L2 (strain ATCC VR-902B / DSM 19102 / 434/Bu), this protein is Demethylmenaquinone methyltransferase.